Reading from the N-terminus, the 90-residue chain is MDRRRMALRPGSRRPTAFFFHSRWLVPNLLAFFLGLSGAGPIHLPMPWPNGRRHRVLDPHTQLSTHEAPGRWKPVAPRTMKACPQVLLEW.

Highly expressed in prostate and testis. Also detected in placenta, muscle, colon, peripheral blood leukocytes and skin.

It is found in the nucleus. This is Protein PRAC2 from Homo sapiens (Human).